A 376-amino-acid chain; its full sequence is Erythronate-4-phosphate dehydrogenase (376 aa).

Residues S45 and T67 each coordinate substrate. D147 serves as a coordination point for NAD(+). Residue R209 is part of the active site. Residue D233 coordinates NAD(+). E238 is an active-site residue. Residue H255 is the Proton donor of the active site. Residue G258 coordinates NAD(+). Y259 contacts substrate.

The protein belongs to the D-isomer specific 2-hydroxyacid dehydrogenase family. PdxB subfamily. As to quaternary structure, homodimer.

It is found in the cytoplasm. It catalyses the reaction 4-phospho-D-erythronate + NAD(+) = (R)-3-hydroxy-2-oxo-4-phosphooxybutanoate + NADH + H(+). The protein operates within cofactor biosynthesis; pyridoxine 5'-phosphate biosynthesis; pyridoxine 5'-phosphate from D-erythrose 4-phosphate: step 2/5. Catalyzes the oxidation of erythronate-4-phosphate to 3-hydroxy-2-oxo-4-phosphonooxybutanoate. This Shewanella baltica (strain OS223) protein is Erythronate-4-phosphate dehydrogenase.